The primary structure comprises 993 residues: DNA-binding protein SMUBP-2 (993 aa).

Residue Ala2 is modified to N-acetylalanine. ATP is bound by residues 214–221 (GPPGTGKT), Gln403, Tyr442, and Glu571. Residues 638–785 (TAFEYLDDIV…KRRFITVSKR (148 aa)) are SS DNA-binding. Disordered regions lie at residues 651–723 (YSHE…VESQ), 782–828 (VSKR…PDQP), and 841–879 (VRSA…DLPT). Composition is skewed to polar residues over residues 653-662 (HENSQGSSHA) and 669-681 (PATS…QRQE). An R3H domain is found at 723 to 786 (QDGVDHFRAM…RRFITVSKRA (64 aa)). Residues 818-828 (PPREQRGPDQP) are compositionally biased toward basic and acidic residues. Polar residues predominate over residues 842-859 (RSAQGQPASKEQQASGQQ). Residues 864-868 (KKKKK) carry the Nuclear localization signal motif. An AN1-type zinc finger spans residues 891-940 (VKADNTCGFAKCTAGVTTLGQFCQLCSRRYCLSHHLPEIHGCGERARAHA). 8 residues coordinate Zn(2+): Cys897, Cys902, Cys913, Cys916, Cys921, His924, His930, and Cys932. The disordered stretch occupies residues 971–993 (RRLDKKLSELSNQRTSRRKERGT).

Belongs to the DNA2/NAM7 helicase family. In terms of assembly, homooligomer. Interacts with RUVBL1. Interacts with RUVBL2. Interacts with GTF3C1. Interacts with ABT1. Interacts with ribosomes. Expressed in all tissues examined. Expressed in the developing and adult human brain, with highest expression in the cerebellum. Moderately expressed in fibroblasts.

The protein localises to the nucleus. Its subcellular location is the cytoplasm. It localises to the cell projection. It is found in the axon. It carries out the reaction ATP + H2O = ADP + phosphate + H(+). In terms of biological role, 5' to 3' helicase that unwinds RNA and DNA duplexes in an ATP-dependent reaction. Specific to 5'-phosphorylated single-stranded guanine-rich sequences. May play a role in RNA metabolism, ribosome biogenesis or initiation of translation. May play a role in regulation of transcription. Interacts with tRNA-Tyr. The sequence is that of DNA-binding protein SMUBP-2 (IGHMBP2) from Homo sapiens (Human).